The sequence spans 176 residues: Skp1-related protein (176 aa).

The protein belongs to the SKP1 family. Probable component of the SCF(sel-10) E3 ubiquitin-protein ligase complex containing F-box domain-containing protein sel-10 as the substrate recognition component. Interacts with cul-1. May interact with the F-box protein mec-15. Interacts with dre-1. Interacts with syg-1. Interacts with sel-10. Ubiquitously expressed in the adult.

Probable essential component of SCF (SKP1-CUL1-F-box protein) E3 ubiquitin-protein ligase complexes, which mediate the ubiquitination and subsequent proteasomal degradation of target proteins. Regulates cell proliferation during embryonic and larval development. Involved in synapse elimination in early synapse development. May negatively regulate the apoptotic activity of cep-1 in response to genotoxic stress. Plays a role in sex determination. In Caenorhabditis elegans, this protein is Skp1-related protein.